The following is a 1090-amino-acid chain: Vinculin (1090 aa).

2 repeat units span residues 339 to 446 (DADN…SQNS) and 455 to 561 (QNAQ…DLGD). The interval 339 to 561 (DADNVTVMRK…LKNALRDLGD (223 aa)) is 2 X repeats. Disordered stretches follow at residues 811–842 (GVPM…SQVI) and 864–895 (DIPA…EEET). Residues 817–830 (GRHSSYQESISRAS) are compositionally biased toward polar residues. Positions 866–887 (PAPPRPPPPVELSPPPRPPPPP) are enriched in pro residues.

The protein belongs to the vinculin/alpha-catenin family. In terms of assembly, may interact with sorb-1. In terms of tissue distribution, expressed in gonadal sheath cells and the spermatheca. Expressed in body wall muscles.

It is found in the cytoplasm. It localises to the cytoskeleton. The protein resides in the cell junction. Its subcellular location is the adherens junction. The protein localises to the cell membrane. It is found in the focal adhesion. In terms of biological role, involved in cell adhesion. May be involved in the attachment of the actin-based microfilaments to the plasma membrane. Involved in ovulation. This chain is Vinculin, found in Caenorhabditis elegans.